A 777-amino-acid polypeptide reads, in one-letter code: MLPRPLRLLLDTSPPGGVVLSSFRSRDPEEGGGPGGLVVGGGQEEEEEEEEEAPVSVWDEEEDGAVFTVTSRQYRPLDPLVPMPPPRSSRRLRAGTLEALVRHLLDTRTSGTDVSFMSAFLATHRAFTSTPALLGLMADRLEALESHPTDELERTTEVAISVLSTWLASHPEDFGSEAKGQLDRLESFLLQTGYAAGKGVGGGSADLIRNLRSRVDPQAPDLPKPLALPGDPPADPTDVLVFLADHLAEQLTLLDAELFLNLIPSQCLGGLWGHRDRPGHSHLCPSVRATVTQFNKVAGAVVSSVLGATSTGEGPGEVTIRPLRPPQRARLLEKWIRVAEECRLLRNFSSVYAVVSALQSSPIHRLRAAWGEATRDSLRVFSSLCQIFSEEDNYSQSRELLVQEVKLQSPLEPHSKKAPRSGSRGGGVVPYLGTFLKDLVMLDAASKDELENGYINFDKRRKEFAVLSELRRLQNECRGYNLQPDHDIQRWLQGLRPLTEAQSHRVSCEVEPPGSSDPPAPRVLRPTLVISQWTEVLGSVGVPTPLVSCDRPSTGGDEAPTTPAPLLTRLAQHMKWPSVSSLDSALESSPSLHSPADPSHLSPPASSPRPSRGHRRSASCGSPLSGGAEEASGGTGYGGEGSGPGASDCRIIRVQMELGEDGSVYKSILVTSQDKAPSVISRVLKKNNRDSAVASEYELVQLLPGERELTIPASANVFYAMDGASHDFLLRQRRRSSTATPGVTSGPSASGTPPSEGGGGSFPRIKATGRKIARALF.

Positions 1–54 are disordered; sequence MLPRPLRLLLDTSPPGGVVLSSFRSRDPEEGGGPGGLVVGGGQEEEEEEEEEAP. Ser13 carries the phosphoserine modification. Residues 31–42 are compositionally biased toward gly residues; it reads GGGPGGLVVGGG. Over residues 43–54 the composition is skewed to acidic residues; it reads QEEEEEEEEEAP. One can recognise an N-terminal Ras-GEF domain in the interval 88-212; it reads SSRRLRAGTL…GSADLIRNLR (125 aa). A Ras-GEF domain is found at 243 to 513; it reads LADHLAEQLT…HRVSCEVEPP (271 aa). A Phosphoserine modification is found at Ser409. Low complexity-rich tracts occupy residues 581–610 and 618–632; these read SLDS…SPRP and ASCG…EEAS. 2 disordered regions span residues 581 to 644 and 734 to 766; these read SLDS…GSGP and RRSS…PRIK. Over residues 633-644 the composition is skewed to gly residues; that stretch reads GGTGYGGEGSGP. The Ras-associating domain occupies 648–735; the sequence is DCRIIRVQME…HDFLLRQRRR (88 aa). Low complexity predominate over residues 740–755; that stretch reads TPGVTSGPSASGTPPS.

In terms of assembly, interacts with SAMD9.

Its function is as follows. Probable guanine nucleotide exchange factor. Putative effector of Ras and/or Rap. Associates with the GTP-bound form of Rap 1A and H-Ras in vitro. The polypeptide is Ral guanine nucleotide dissociation stimulator-like 2 (RGL2) (Homo sapiens (Human)).